The primary structure comprises 26 residues: Unknown protein 16 (26 aa).

The segment at 1–26 (AINSESGVRSVVPQPCNALPNQGPEK) is disordered.

The polypeptide is Unknown protein 16 (Pseudotsuga menziesii (Douglas-fir)).